A 113-amino-acid chain; its full sequence is Sperm-associated antigen 11B (113 aa).

A signal peptide spans 1-26; that stretch reads MIPRLLPFFASLLFAALLFPGLSNAS. 3 disulfide bridges follow: Cys80/Cys108, Cys87/Cys101, and Cys91/Cys109.

This sequence belongs to the beta-defensin family.

Its subcellular location is the secreted. In terms of biological role, has antimicrobial activity against E.coli. Plays a role in the defense response in the male reproductive tract, contributing to sperm maturation, storage and protection. This Mus musculus (Mouse) protein is Sperm-associated antigen 11B.